We begin with the raw amino-acid sequence, 69 residues long: Light-harvesting protein B-1015 alpha chain (69 aa).

Over 2–20 (ATEYRTASWKLWLILDPRR) the chain is Cytoplasmic. Residues 21 to 41 (VLTALFVYLTVIALLIHFGLL) form a helical membrane-spanning segment. Position 37 (His37) interacts with a bacteriochlorophyll. At 42–59 (STDRLNWWEFQRGLPKAA) the chain is on the periplasmic side. Positions 60-69 (SLVVVPPAVG) are excised as a propeptide.

The protein belongs to the antenna complex alpha subunit family. As to quaternary structure, the core complex is formed by different alpha and beta chains, binding bacteriochlorophyll molecules, and arranged most probably in tetrameric structures disposed around the reaction center. The non-pigmented gamma chains may constitute additional components.

The protein resides in the cell inner membrane. Its function is as follows. Antenna complexes are light-harvesting systems, which transfer the excitation energy to the reaction centers. This Blastochloris viridis (Rhodopseudomonas viridis) protein is Light-harvesting protein B-1015 alpha chain (pufA).